A 311-amino-acid chain; its full sequence is Ribosomal RNA large subunit methyltransferase F (311 aa).

Belongs to the methyltransferase superfamily. METTL16/RlmF family.

It is found in the cytoplasm. It carries out the reaction adenosine(1618) in 23S rRNA + S-adenosyl-L-methionine = N(6)-methyladenosine(1618) in 23S rRNA + S-adenosyl-L-homocysteine + H(+). Its function is as follows. Specifically methylates the adenine in position 1618 of 23S rRNA. This chain is Ribosomal RNA large subunit methyltransferase F, found in Pectobacterium carotovorum subsp. carotovorum (strain PC1).